The following is a 433-amino-acid chain: Oxaloacetate decarboxylase beta chain 2 (433 aa).

9 helical membrane passes run 13-35, 42-64, 125-147, 160-182, 214-236, 266-288, 308-327, 339-361, and 413-432; these read LMHLGAGQAIMLLVSLLLLWLAI, LLLLPIGFGGLLSNIPEAGLALT, LFYKVAIGSGVAPLVIFMGVGAM, LLLGAAAQFGIFATVLGALTLNY, LAPELLGAIAVAAYSYMALVPLI, ILFPVVLLMLVALLLPDAAPLLG, TVQNGLINIVTIFLGLSVGA, TLGILLLGVIAFGIGTAAGVLMA, and VAGVIGSAIAAGVMLKYVLA.

The protein belongs to the GcdB/MmdB/OadB family. In terms of assembly, heterotrimer of an alpha, a beta and a gamma subunit. Na(+) serves as cofactor.

It is found in the cell membrane. It carries out the reaction oxaloacetate + 2 Na(+)(in) + H(+) = pyruvate + 2 Na(+)(out) + CO2. In terms of biological role, catalyzes the decarboxylation of oxaloacetate coupled to Na(+) translocation. The polypeptide is Oxaloacetate decarboxylase beta chain 2 (oadB2) (Salmonella typhimurium (strain LT2 / SGSC1412 / ATCC 700720)).